We begin with the raw amino-acid sequence, 327 residues long: D-alanine--D-alanine ligase (327 aa).

In terms of domain architecture, ATP-grasp spans 113–312 (KRLWMTHDLS…YEDFVMQVVA (200 aa)). Residue 139–194 (VADLGLPLIVKPAREGSSIGLSKVTDASQMREAFEKAAALDNDVIAETFIDGAELT) coordinates ATP. Asp-266, Glu-279, and Asn-281 together coordinate Mg(2+).

Belongs to the D-alanine--D-alanine ligase family. Requires Mg(2+) as cofactor. It depends on Mn(2+) as a cofactor.

The protein localises to the cytoplasm. It carries out the reaction 2 D-alanine + ATP = D-alanyl-D-alanine + ADP + phosphate + H(+). It participates in cell wall biogenesis; peptidoglycan biosynthesis. In terms of biological role, cell wall formation. The polypeptide is D-alanine--D-alanine ligase (Cupriavidus pinatubonensis (strain JMP 134 / LMG 1197) (Cupriavidus necator (strain JMP 134))).